The sequence spans 317 residues: Beta-ketoacyl-[acyl-carrier-protein] synthase III (317 aa).

Catalysis depends on residues C112 and H244. Positions 245 to 249 are ACP-binding; that stretch reads QANLR. The active site involves N274.

The protein belongs to the thiolase-like superfamily. FabH family. As to quaternary structure, homodimer.

It is found in the cytoplasm. It carries out the reaction malonyl-[ACP] + acetyl-CoA + H(+) = 3-oxobutanoyl-[ACP] + CO2 + CoA. Its pathway is lipid metabolism; fatty acid biosynthesis. Functionally, catalyzes the condensation reaction of fatty acid synthesis by the addition to an acyl acceptor of two carbons from malonyl-ACP. Catalyzes the first condensation reaction which initiates fatty acid synthesis and may therefore play a role in governing the total rate of fatty acid production. Possesses both acetoacetyl-ACP synthase and acetyl transacylase activities. Its substrate specificity determines the biosynthesis of branched-chain and/or straight-chain of fatty acids. The polypeptide is Beta-ketoacyl-[acyl-carrier-protein] synthase III (Salmonella paratyphi B (strain ATCC BAA-1250 / SPB7)).